The sequence spans 123 residues: MIQEQTMLNVADNSGARRVMCIKVLGGSHRRYADVGDIIKITIKEAIPRGKVKKGDVLKAVVVRTKKGVRRPDGSVIRFDSNACVLLNNNSEQVIGTRIFGPVTRELRNEKFMKIISLAPEVL.

Belongs to the universal ribosomal protein uL14 family. As to quaternary structure, part of the 50S ribosomal subunit. Forms a cluster with proteins L3 and L19. In the 70S ribosome, L14 and L19 interact and together make contacts with the 16S rRNA in bridges B5 and B8.

In terms of biological role, binds to 23S rRNA. Forms part of two intersubunit bridges in the 70S ribosome. The chain is Large ribosomal subunit protein uL14 from Proteus mirabilis (strain HI4320).